A 333-amino-acid polypeptide reads, in one-letter code: Adenosine deaminase (333 aa).

Histidine 12 and histidine 14 together coordinate Zn(2+). Residues histidine 14, aspartate 16, and glycine 170 each coordinate substrate. Histidine 197 lines the Zn(2+) pocket. Glutamate 200 (proton donor) is an active-site residue. Aspartate 278 contacts Zn(2+). Aspartate 279 is a substrate binding site.

It belongs to the metallo-dependent hydrolases superfamily. Adenosine and AMP deaminases family. Adenosine deaminase subfamily. Requires Zn(2+) as cofactor.

The catalysed reaction is adenosine + H2O + H(+) = inosine + NH4(+). It carries out the reaction 2'-deoxyadenosine + H2O + H(+) = 2'-deoxyinosine + NH4(+). Catalyzes the hydrolytic deamination of adenosine and 2-deoxyadenosine. The sequence is that of Adenosine deaminase from Salmonella gallinarum (strain 287/91 / NCTC 13346).